The chain runs to 548 residues: Membrane protein insertase YidC (548 aa).

A helical membrane pass occupies residues 6–26 (NLLVIALLFVSFMIWQAWEQD). Residues 28–56 (NPQPQTQQTTQTTTTAAGSAADQGVPASG) form a disordered region. Over residues 29 to 42 (PQPQTQQTTQTTTT) the composition is skewed to low complexity. The next 4 helical transmembrane spans lie at 350–370 (FVGNWGFSIIIITFIVRGIMY), 424–444 (FPLIIQMPIFLALYYMLMGSI), 458–478 (LSAQDPYYILPILMGVTMFFI), and 499–519 (PVIFTVFFLWFPSGLVLYYIV).

This sequence belongs to the OXA1/ALB3/YidC family. Type 1 subfamily. As to quaternary structure, interacts with the Sec translocase complex via SecD. Specifically interacts with transmembrane segments of nascent integral membrane proteins during membrane integration.

The protein resides in the cell inner membrane. Functionally, required for the insertion and/or proper folding and/or complex formation of integral membrane proteins into the membrane. Involved in integration of membrane proteins that insert both dependently and independently of the Sec translocase complex, as well as at least some lipoproteins. Aids folding of multispanning membrane proteins. This is Membrane protein insertase YidC from Salmonella newport (strain SL254).